The sequence spans 613 residues: Serine/threonine-protein kinase pkpA (613 aa).

In terms of domain architecture, Protein kinase spans 17–269; the sequence is SKLNTVLGKG…AQEILEHRFL (253 aa). ATP contacts are provided by residues 23-31 and Lys50; that span reads LGKGAYKVV. Residue Asp140 is the Proton acceptor of the active site. 2 disordered regions span residues 424 to 475 and 589 to 613; these read LQPQ…STML and VTQR…QELM. A compositionally biased stretch (pro residues) spans 427–441; that stretch reads QPQPQPQPQPQPQPQ. Residues 442–475 are compositionally biased toward low complexity; the sequence is PQFQLQPQLQYLSPQSTTSPGPTSDDNSTNSTML. Residues 592–602 show a composition bias toward polar residues; the sequence is RGLQGTRSGAS.

This sequence belongs to the protein kinase superfamily. Ser/Thr protein kinase family.

It catalyses the reaction L-seryl-[protein] + ATP = O-phospho-L-seryl-[protein] + ADP + H(+). The catalysed reaction is L-threonyl-[protein] + ATP = O-phospho-L-threonyl-[protein] + ADP + H(+). Its function is as follows. Serine/threonine protein kinase that probably participates as an intermediate in an intracellular system controlling nuclear proliferation. This Phycomyces blakesleeanus (strain ATCC 8743b / DSM 1359 / FGSC 10004 / NBRC 33097 / NRRL 1555) protein is Serine/threonine-protein kinase pkpA (pkpA).